The primary structure comprises 1049 residues: Multidrug efflux pump subunit AcrB (1049 aa).

Topologically, residues 1–9 are cytoplasmic; the sequence is MPNFFIDRP. A helical transmembrane segment spans residues 10–28; the sequence is IFAWVIAIIIMLAGGLAIL. Over 29 to 336 the chain is Periplasmic; that stretch reads KLPVAQYPTI…YDTTPFVKIS (308 aa). A helical membrane pass occupies residues 337-356; that stretch reads IHEVVKTLVEAIILVFLVMY. The Cytoplasmic portion of the chain corresponds to 357 to 365; the sequence is LFLQNFRAT. A helical membrane pass occupies residues 366–385; sequence LIPTIAVPVVLLGTFAVLAA. Topologically, residues 386 to 391 are periplasmic; sequence FGFSIN. Residues 392–413 traverse the membrane as a helical segment; that stretch reads TLTMFGMVLAIGLLVDDAIVVV. The Cytoplasmic portion of the chain corresponds to 414–438; that stretch reads ENVERVMAEEGLPPKEATRKSMGQI. The helical transmembrane segment at 439 to 457 threads the bilayer; sequence QGALVGIAMVLSAVFVPMA. Residues 458–465 lie on the Periplasmic side of the membrane; the sequence is FFGGSTGA. The chain crosses the membrane as a helical span at residues 466-490; the sequence is IYRQFSITIVSAMALSVLVALILTP. Topologically, residues 491–538 are cytoplasmic; the sequence is ALCATMLKPIAKGDHGEGKKGFFGWFNRMFEKSTHHYTDSVGGILRST. The helical transmembrane segment at 539–555 threads the bilayer; that stretch reads GRYLVLYLIIVVGMAYL. At 556–871 the chain is on the periplasmic side; it reads FVRLPSSFLP…MSYQERLSGN (316 aa). The chain crosses the membrane as a helical span at residues 872 to 888; that stretch reads QAPSLYAISLIVVFLCL. At 889–898 the chain is on the cytoplasmic side; it reads AALYESWSIP. A helical transmembrane segment spans residues 899-918; the sequence is FSVMLVVPLGVIGALLAATF. Residues 919–924 lie on the Periplasmic side of the membrane; it reads RGLTND. The helical transmembrane segment at 925-943 threads the bilayer; that stretch reads VYFQVGLLTTIGLSAKNAI. Topologically, residues 944-972 are cytoplasmic; sequence LIVEFAKDLMDKEGKGLIEATLDAVRMRL. The helical transmembrane segment at 973–992 threads the bilayer; sequence RPILMTSLAFILGVMPLVIS. The Periplasmic segment spans residues 993-998; the sequence is TGAGSG. A helical membrane pass occupies residues 999–1018; the sequence is AQNAVGTGVMGGMVTATVLA. Residues 1019 to 1049 lie on the Cytoplasmic side of the membrane; that stretch reads IFFVPVFFVVVRRRFSRKNEDIEHSHTVDHH.

Belongs to the resistance-nodulation-cell division (RND) (TC 2.A.6) family. As to quaternary structure, homotrimer, with large domains that extend into the periplasm, interacts with AcrA and TolC. AcrA may be required to stably link this protein and TolC. Interacts with AcrZ. Part of the AcrA-AcrB-AcrZ-TolC efflux pump.

Its subcellular location is the cell inner membrane. Functionally, acrA-AcrB-AcrZ-TolC is a drug efflux protein complex with broad substrate specificity that uses the proton motive force to export substrates. In terms of biological role, (Microbial infection) Involved in contact-dependent growth inhibition (CDI), acts downstream of BamA, the receptor for CDI. Its role in CDI is independent of the AcrA-AcrB-TolC efflux pump complex. The polypeptide is Multidrug efflux pump subunit AcrB (acrB) (Escherichia coli (strain K12)).